A 162-amino-acid polypeptide reads, in one-letter code: Interleukin-15 (162 aa).

Residues 1 to 29 (MRISKPYLRSTSIQCYLCLLLNSHFLAEA) form the signal peptide. Residues 30-48 (GIHVFIFGCISAGLPKTEA) constitute a propeptide that is removed on maturation. 2 disulfide bridges follow: cysteine 83/cysteine 133 and cysteine 90/cysteine 136. N-linked (GlcNAc...) asparagine glycosylation is found at asparagine 108, asparagine 119, asparagine 127, and asparagine 143.

The protein belongs to the IL-15/IL-21 family. As to expression, expressed in many tissues including heart, spleen, lung, liver, muscle and kidney (at mRNA level). Expressed in many tissues including heart, spleen, lung, liver, muscle and kidney (at protein level).

It localises to the secreted. In terms of biological role, cytokine that plays a major role in the development of inflammatory and protective immune responses to microbial invaders and parasites by modulating immune cells of both the innate and adaptive immune systems. Stimulates the proliferation of natural killer cells, T-cells and B-cells and promotes the secretion of several cytokines. In monocytes, induces the production of IL8 and monocyte chemotactic protein 1/CCL2, two chemokines that attract neutrophils and monocytes respectively to sites of infection. Unlike most cytokines, which are secreted in soluble form, IL15 is expressed in association with its high affinity IL15RA on the surface of IL15-producing cells and delivers signals to target cells that express IL2RB and IL2RG receptor subunits. Binding to its receptor triggers the phosphorylation of JAK1 and JAK3 and the recruitment and subsequent phosphorylation of signal transducer and activator of transcription-3/STAT3 and STAT5. In mast cells, induces the rapid tyrosine phosphorylation of STAT6 and thereby controls mast cell survival and release of cytokines such as IL4. This is Interleukin-15 (IL15) from Oryctolagus cuniculus (Rabbit).